A 496-amino-acid polypeptide reads, in one-letter code: Lysine--tRNA ligase (496 aa).

Positions 409 and 416 each coordinate Mg(2+).

This sequence belongs to the class-II aminoacyl-tRNA synthetase family. As to quaternary structure, homodimer. It depends on Mg(2+) as a cofactor.

It is found in the cytoplasm. It carries out the reaction tRNA(Lys) + L-lysine + ATP = L-lysyl-tRNA(Lys) + AMP + diphosphate. This Streptococcus pneumoniae serotype 4 (strain ATCC BAA-334 / TIGR4) protein is Lysine--tRNA ligase.